Reading from the N-terminus, the 331-residue chain is PDZ and LIM domain protein 4 (331 aa).

The PDZ domain maps to 1 to 84 (MPHSVTLRGP…HLTLSVSRPE (84 aa)). Disordered stretches follow at residues 80-99 (VSRP…KAQA), 105-152 (DSEA…GSNS), and 221-243 (AGEG…ASKL). Phosphoserine is present on residues Ser-112, Ser-116, Ser-120, and Ser-135. The 60-residue stretch at 254 to 313 (PECTRCGHGIVGTIVKARDKLYHPECFMCSDCGLNLKQRGYFFLDERLYCESHAKARVKP) folds into the LIM zinc-binding domain.

As to quaternary structure, homodimer. Interacts (via C-terminus only or via combined C-terminus and LIM domain, but not LIM domain only) with PTPN13 (via the second or fourth PDZ domains). Found in a complex with PTPN13 and TRIP6. Interacts (via PDZ domain) with ACTN1 and ACTN2 (via C-terminal SDL residues). Interacts (via PDZ domain) with TRIP6 (via the second LIM domain or via the third LIM domain plus C-terminus). Interacts (via LIM domain) with GRIA1 (via C-terminus); this interaction as well as the interaction with alpha-actinin is required for their colocalization in early endosomes. Interacts with PDLIM1. Forms (via LIM domain) a heterodimer with PDLIM3. Interacts directly with SRC (via kinase domain and to a lesser extent the SH2 domain). Post-translationally, phosphorylated on tyrosine residue(s). Can be dephosphorylated by PTPN13.

It localises to the cytoplasm. It is found in the cytoskeleton. The protein resides in the cell projection. Its subcellular location is the dendritic spine. The protein localises to the early endosome membrane. It localises to the recycling endosome membrane. It is found in the nucleus. The protein resides in the perinuclear region. Its subcellular location is the lamellipodium. The protein localises to the synapse. It localises to the synaptosome. Its function is as follows. Suppresses SRC activation by recognizing and binding to active SRC and facilitating PTPN13-mediated dephosphorylation of SRC 'Tyr-419' leading to its inactivation. Inactivated SRC dissociates from this protein allowing the initiation of a new SRC inactivation cycle. Involved in reorganization of the actin cytoskeleton. In nonmuscle cells, binds to ACTN1 (alpha-actinin-1), increases the affinity of ACTN1 to F-actin (filamentous actin), and promotes formation of actin stress fibers. Involved in regulation of the synaptic AMPA receptor transport in dendritic spines of hippocampal pyramidal neurons directing the receptors toward an insertion at the postsynaptic membrane. Links endosomal surface-internalized GRIA1-containing AMPA receptors to the alpha-actinin/actin cytoskeleton. Increases AMPA receptor-mediated excitatory postsynaptic currents in neurons. This Bos taurus (Bovine) protein is PDZ and LIM domain protein 4 (PDLIM4).